The primary structure comprises 134 residues: MNTLNLDIVTPNGSVYNRDNVELVVMQTTAGEIGVMSGHIPTVAALKTGFVKVKFHDGTEYIAVSDGFVEVRKDKVSIIVQTAETAREIDVERAKLAKARAESHLENDDDNTDIHRAERALERANNRLRVAELK.

This sequence belongs to the ATPase epsilon chain family. As to quaternary structure, F-type ATPases have 2 components, CF(1) - the catalytic core - and CF(0) - the membrane proton channel. CF(1) has five subunits: alpha(3), beta(3), gamma(1), delta(1), epsilon(1). CF(0) has three main subunits: a, b and c.

It localises to the cell membrane. Produces ATP from ADP in the presence of a proton gradient across the membrane. This is ATP synthase epsilon chain from Staphylococcus aureus (strain USA300).